The sequence spans 344 residues: Aromatic amino acid aminotransferase (344 aa).

The residue at position 213 (Lys213) is an N6-(pyridoxal phosphate)lysine.

The protein belongs to the class-II pyridoxal-phosphate-dependent aminotransferase family. In terms of assembly, homodimer. Pyridoxal 5'-phosphate is required as a cofactor.

The enzyme catalyses an aromatic L-alpha-amino acid + 2-oxoglutarate = an aromatic oxo-acid + L-glutamate. Functionally, aminotransferase that catalyzes the conversion of aromatic amino acids and 2-oxoglutarate into corresponding aromatic oxo acids and L-glutamate. The protein is Aromatic amino acid aminotransferase of Corynebacterium diphtheriae (strain ATCC 700971 / NCTC 13129 / Biotype gravis).